Consider the following 388-residue polypeptide: uncharacterized protein (388 aa).

The next 8 helical transmembrane spans lie at 15 to 37 (VISAFLSISLFEGFVILTLLLVL), 97 to 119 (GFSKIFPKLLLGISLILLPVVFY), 129 to 151 (PIWGGTFEVGFFYALFSITTFLL), 158 to 175 (FIYIPLFLLFLAVIFLSA), 179 to 196 (MMLAFFVIFYLILFVLFK), 203 to 225 (LAFWSVNFLIILSFIGGYVYLSQ), 304 to 326 (IFIVSEFIERGILGLLGILYIYF), and 347 to 369 (LLSVPLGLHLIQSVFTFFWDALL).

It localises to the cell membrane. This is an uncharacterized protein from Aquifex aeolicus (strain VF5).